Consider the following 132-residue polypeptide: Peptide methionine sulfoxide reductase MsrB (132 aa).

The MsrB domain occupies 9–131 (DAQWRAELSP…NSASLSFHPK (123 aa)). 4 residues coordinate Zn(2+): Cys-48, Cys-51, Cys-97, and Cys-100. Cys-120 acts as the Nucleophile in catalysis.

This sequence belongs to the MsrB Met sulfoxide reductase family. The cofactor is Zn(2+).

It catalyses the reaction L-methionyl-[protein] + [thioredoxin]-disulfide + H2O = L-methionyl-(R)-S-oxide-[protein] + [thioredoxin]-dithiol. This Thiobacillus denitrificans (strain ATCC 25259 / T1) protein is Peptide methionine sulfoxide reductase MsrB.